The sequence spans 498 residues: ATP synthase subunit beta, chloroplastic (498 aa).

Position 172–179 (172–179 (GGAGVGKT)) interacts with ATP.

It belongs to the ATPase alpha/beta chains family. F-type ATPases have 2 components, CF(1) - the catalytic core - and CF(0) - the membrane proton channel. CF(1) has five subunits: alpha(3), beta(3), gamma(1), delta(1), epsilon(1). CF(0) has four main subunits: a(1), b(1), b'(1) and c(9-12).

It localises to the plastid. Its subcellular location is the chloroplast thylakoid membrane. The enzyme catalyses ATP + H2O + 4 H(+)(in) = ADP + phosphate + 5 H(+)(out). Functionally, produces ATP from ADP in the presence of a proton gradient across the membrane. The catalytic sites are hosted primarily by the beta subunits. In Solanum lycopersicum (Tomato), this protein is ATP synthase subunit beta, chloroplastic.